Reading from the N-terminus, the 309-residue chain is Wall-associated proteinase (309 aa).

N-linked (GlcNAc...) asparagine glycans are attached at residues Asn-190 and Asn-295.

It localises to the secreted. It is found in the cell wall. The protein localises to the membrane. Functionally, may participate in wall plasticization and/or intussusception or in cell wall turnover. The sequence is that of Wall-associated proteinase from Coccidioides immitis (strain RS) (Valley fever fungus).